Here is a 291-residue protein sequence, read N- to C-terminus: Cilia- and flagella-associated protein 298 (291 aa).

This sequence belongs to the CFAP298 family.

The chain is Cilia- and flagella-associated protein 298 from Drosophila melanogaster (Fruit fly).